Reading from the N-terminus, the 138-residue chain is Membrane glycoprotein UL139 (138 aa).

Residues 1-15 (MLWILVLFALAASAS) form the signal peptide. The segment at 17-37 (TTTGTSSNSSQSTSAGTTNTT) is disordered. The helical transmembrane segment at 64–84 (GWTLSGLLLIFTCCLCCFWLV) threads the bilayer. Over residues 113–129 (SDATLPMGTTGSYTPPQ) the composition is skewed to polar residues. Residues 113 to 138 (SDATLPMGTTGSYTPPQDGSFPPPPR) are disordered.

The protein localises to the host membrane. The protein is Membrane glycoprotein UL139 (UL139) of Homo sapiens (Human).